The sequence spans 893 residues: UPF0182 protein CLM_0018 (893 aa).

7 consecutive transmembrane segments (helical) span residues 9–29 (IPLF…NFII), 49–69 (AIII…WMYY), 94–114 (LFFI…SSSY), 154–174 (VIIS…FILE), 202–222 (LAIV…IKIW), 246–266 (FYKI…LSIV), and 273–293 (VSVC…ASFL).

It belongs to the UPF0182 family.

The protein resides in the cell membrane. This is UPF0182 protein CLM_0018 from Clostridium botulinum (strain Kyoto / Type A2).